A 157-amino-acid chain; its full sequence is MSNASGGGPRPRRRDGVDPALRSRARRRALQAVYAWQISGGVAKQVIAHFAHEQAYEVADLAYFEDLVEGVLTHCAELDEKLTPYLDRTIEEVDAIERAVLRLGAYELLYRQDVPYRVVINEAIMTAKRFGSKYGHTYVNGVLDRAALALRKVEVLG.

It belongs to the NusB family.

In terms of biological role, involved in transcription antitermination. Required for transcription of ribosomal RNA (rRNA) genes. Binds specifically to the boxA antiterminator sequence of the ribosomal RNA (rrn) operons. This is Transcription antitermination protein NusB from Xylella fastidiosa (strain 9a5c).